Here is a 509-residue protein sequence, read N- to C-terminus: Mitogen-activated protein kinase sma-5 (509 aa).

Residues 19–72 are disordered; sequence DPITSMSPPQENRSPKAEYLNNFFNTNPTNGKSRGSQEAPRKPLGQTNLNVQGS. Polar residues-rich tracts occupy residues 20-30 and 40-54; these read PITSMSPPQEN and NFFN…SRGS. A Protein kinase domain is found at 105–411; sequence YEPTQNIGSG…IQDALLHPYI (307 aa). Residues 111–119 and Lys-134 contribute to the ATP site; that span reads IGSGAFGIV. The active-site Proton acceptor is the Asp-231. Positions 460-482 are disordered; the sequence is YSELHSGDSTGSTSDMSTNTSGE. A compositionally biased stretch (low complexity) spans 466–481; the sequence is GDSTGSTSDMSTNTSG.

This sequence belongs to the protein kinase superfamily. CMGC Ser/Thr protein kinase family. MAP kinase subfamily. Requires Mg(2+) as cofactor. As to expression, expressed in intestine with a stronger expression in the four most anterior cells, muscles, excretory cell, pharynx and, to a lesser extent, in hypodermis.

It catalyses the reaction L-seryl-[protein] + ATP = O-phospho-L-seryl-[protein] + ADP + H(+). The catalysed reaction is L-threonyl-[protein] + ATP = O-phospho-L-threonyl-[protein] + ADP + H(+). Functionally, serine/threonine-protein kinase involved in the postembryonic regulation of body size, mainly through control of cell growth. In particular, controls the volume of intestine, muscles and hypodermis. In addition, regulates growth, intestinal granule distribution, lifespan and number of offspring. This Caenorhabditis elegans protein is Mitogen-activated protein kinase sma-5.